The following is a 109-amino-acid chain: Nucleoid-associated protein YbaB (109 aa).

It belongs to the YbaB/EbfC family. As to quaternary structure, homodimer.

It localises to the cytoplasm. The protein localises to the nucleoid. Binds to DNA and alters its conformation. May be involved in regulation of gene expression, nucleoid organization and DNA protection. The protein is Nucleoid-associated protein YbaB of Escherichia coli O127:H6 (strain E2348/69 / EPEC).